The chain runs to 212 residues: Glycerol-3-phosphate acyltransferase (212 aa).

5 consecutive transmembrane segments (helical) span residues 3-23, 51-71, 78-98, 115-135, and 139-159; these read ILLAALVAYLIGSVSFAVIVS, KAAILTLVGDAFKGWLAVWLA, DVAVAWVAIAVFVGHLYPVFF, AVHPVLGLATALTWLIVAFFF, and SLAALVAAVFAPVFDVFLFGT.

The protein belongs to the PlsY family. As to quaternary structure, probably interacts with PlsX.

It is found in the cell inner membrane. It catalyses the reaction an acyl phosphate + sn-glycerol 3-phosphate = a 1-acyl-sn-glycero-3-phosphate + phosphate. The protein operates within lipid metabolism; phospholipid metabolism. Functionally, catalyzes the transfer of an acyl group from acyl-phosphate (acyl-PO(4)) to glycerol-3-phosphate (G3P) to form lysophosphatidic acid (LPA). This enzyme utilizes acyl-phosphate as fatty acyl donor, but not acyl-CoA or acyl-ACP. This chain is Glycerol-3-phosphate acyltransferase, found in Burkholderia vietnamiensis (strain G4 / LMG 22486) (Burkholderia cepacia (strain R1808)).